The sequence spans 221 residues: Arginine ABC transporter permease protein ArtQ (221 aa).

Residues 13-206 (ALMTLGLAVC…AVTLISQVGI (194 aa)) form the ABC transmembrane type-1 domain. The next 5 helical transmembrane spans lie at 17-37 (LGLA…FAVL), 49-69 (VFVA…VYFG), 82-102 (IEFG…AAYA), 121-141 (GAAL…PQVW), and 186-206 (TWYG…QVGI).

Belongs to the binding-protein-dependent transport system permease family. HisMQ subfamily. As to quaternary structure, the complex is composed of two ATP-binding proteins (ArtP), two transmembrane proteins (ArtM and ArtQ) and a solute-binding protein (ArtI).

It is found in the cell inner membrane. Its function is as follows. Part of the ABC transporter complex ArtPIQM involved in arginine transport. Probably responsible for the translocation of the substrate across the membrane. The polypeptide is Arginine ABC transporter permease protein ArtQ (artQ) (Haemophilus influenzae (strain ATCC 51907 / DSM 11121 / KW20 / Rd)).